Reading from the N-terminus, the 308-residue chain is Elongation factor Ts (308 aa).

Positions 80–83 (TDFV) are involved in Mg(2+) ion dislocation from EF-Tu.

This sequence belongs to the EF-Ts family.

Its subcellular location is the cytoplasm. Functionally, associates with the EF-Tu.GDP complex and induces the exchange of GDP to GTP. It remains bound to the aminoacyl-tRNA.EF-Tu.GTP complex up to the GTP hydrolysis stage on the ribosome. In Parvibaculum lavamentivorans (strain DS-1 / DSM 13023 / NCIMB 13966), this protein is Elongation factor Ts.